A 1330-amino-acid polypeptide reads, in one-letter code: MGESDAESDSSSNSSSSDTSSGSDSDARSESSSSESSGREEEEAKQEESAKDAKKTDDTDRGEKRAKERDAGQDEQPTEQKKTPAAEPRSERQHISHSAGVEKQQEEAVAAAEAESEKLNEAKKVETPVQRKEEAEASSVTKELNSPKAQEENAARELEERRKDEEQPVTTNGSSKESPVEAAAETVKPPTADHIEEGEITDKDEDDLPTKEEKKAVASKSPPKETQRKQSRSPDGKRRRPRSSSRSPSPSSRRRRRSRSKGSRTRSRSKSPIRRRSNSLERRRVERQRRHEERDKRDEERAKEREKRHQKGEPTSSRRRDDSREKKRSPERKRDRSSSTPKSKSSKTPRHTETTETNADNETVTEPAAKITERQRKTVDVLTSRTGGAYIPPAKLRMMQSQITDKSSAAYQRIAWEALKKSIHGYINKVNVTNIAIITRELLRENIVRGRGLLSRSIIQAQAASPTFTHVYAALVSIINSKFPNIGELLLKRLVIQFRRAFRRNDKMVCMSATRFIGHLVNQRVAHEILALEILTLLVETPTDDSVEVAIAFLKECGMKLTEVSSKGIGAIFEMLRNILHEGKLDKRVQYMIEVLFQIRKDGFKDHQAVVPELELVEEDDQFTHLMMLDEATETEDILNVFKFDDNYAENEDKYKGLSREILGSDDGSSSGSGSGSDSDSDSDGESGSDAEKKAEAGDIIDSTETNLIALRRTIYLTINSSLDYEECAHKLMKMQLKPGQEIELCHMFLDCCAEQRTYEKFYGLLAQRFCNINKIYIPPFEEIFKDTYQTTHRLDTNRLRNVSKFFAHLLFTDAISWDVLECIQLNEDDTTSSSRIFIKILFQELAEYMGLGKLNAKLKDDVLVESIAGLFPKDNPRNTRFSINFFTSIGLGGLTDDLRRFLKNAPKSVPAINAEILANAGGNPFRDGSAPAGNTKVAPSSSSSSSSSSDTDSEDSSEEDSSSDSSSESSSSDSSSEPKKKRKRKDKDKKKSKKATKEKSKKTKNKKKKKKAEKEQEKEKEKQRKSKKEKEKDKKRKKEEKKAAKKKSKHRRKSQESSDSSGSEDSDKSTSESSDSSNSSSDESDAEPQAKIKRQEHVEKNKFRGRTQDSDEFNLEGPGSKNRFQPNGNGQRRRDNSTGRERNRENSSYDRERNRGNSSYDRERKRGNSSYDRERNRESSYDKERKNRNAVAHDRQRKRDRSRSYERPTIRENSAPREKRMESSRSEKDSRRGDRSSRNERSDRGERSDRGERSDRGERSDRGERSDRGERSDRGERSDREKERSRAKERERDRDRDLKGQRERKRERDDGSRDRSRRERSSRRSKGRS.

Residues 1 to 377 are disordered; sequence MGESDAESDS…AAKITERQRK (377 aa). Positions 9–36 are enriched in low complexity; that stretch reads DSSSNSSSSDTSSGSDSDARSESSSSES. Positions 46–94 are enriched in basic and acidic residues; that stretch reads QEESAKDAKKTDDTDRGEKRAKERDAGQDEQPTEQKKTPAAEPRSERQH. Low complexity predominate over residues 99–113; sequence AGVEKQQEEAVAAAE. Basic and acidic residues predominate over residues 115-135; sequence ESEKLNEAKKVETPVQRKEEA. Residues 138-148 show a composition bias toward polar residues; that stretch reads SSVTKELNSPK. The span at 149–166 shows a compositional bias: basic and acidic residues; sequence AQEENAARELEERRKDEE. The span at 168–177 shows a compositional bias: polar residues; that stretch reads PVTTNGSSKE. Phosphothreonine occurs at positions 191 and 201. Composition is skewed to basic and acidic residues over residues 191–201 and 208–236; these read TADHIEEGEIT and LPTK…SPDG. A phosphoserine mark is found at S219 and S221. Positions 252–277 are enriched in basic residues; it reads SRRRRRSRSKGSRTRSRSKSPIRRRS. Basic and acidic residues-rich tracts occupy residues 278 to 307 and 316 to 325; these read NSLE…EREK and SSRRRDDSRE. Positions 355 to 366 are enriched in low complexity; that stretch reads TETNADNETVTE. The 184-residue stretch at 420–603 folds into the MIF4G domain; it reads KKSIHGYINK…EVLFQIRKDG (184 aa). The tract at residues 660 to 697 is disordered; sequence REILGSDDGSSSGSGSGSDSDSDSDGESGSDAEKKAEA. A compositionally biased stretch (low complexity) spans 665 to 678; sequence SDDGSSSGSGSGSD. Positions 679–689 are enriched in acidic residues; the sequence is SDSDSDGESGS. In terms of domain architecture, MI spans 710–826; sequence ALRRTIYLTI…SWDVLECIQL (117 aa). A disordered region spans residues 926 to 1330; it reads FRDGSAPAGN…RSSRRSKGRS (405 aa). Positions 941-951 are enriched in low complexity; the sequence is SSSSSSSSSSD. The segment covering 952–963 has biased composition (acidic residues); that stretch reads TDSEDSSEEDSS. Positions 964-976 are enriched in low complexity; that stretch reads SDSSSESSSSDSS. Residues 980–1012 show a composition bias toward basic residues; it reads KKKRKRKDKDKKKSKKATKEKSKKTKNKKKKKK. Residues 1013–1033 show a composition bias toward basic and acidic residues; that stretch reads AEKEQEKEKEKQRKSKKEKEK. Over residues 1034–1054 the composition is skewed to basic residues; that stretch reads DKKRKKEEKKAAKKKSKHRRK. The segment covering 1072–1082 has biased composition (low complexity); the sequence is SESSDSSNSSS. Residues 1089–1110 are compositionally biased toward basic and acidic residues; sequence PQAKIKRQEHVEKNKFRGRTQD. T1108 bears the Phosphothreonine mark. S1111, S1121, S1180, and S1181 each carry phosphoserine. 2 stretches are compositionally biased toward basic and acidic residues: residues 1133–1195 and 1203–1320; these read RRRD…VAHD and SRSY…SRRE. Residue Y1182 is modified to Phosphotyrosine. A compositionally biased stretch (basic residues) spans 1321–1330; sequence RSSRRSKGRS.

The protein belongs to the CWC22 family. In terms of assembly, component of the spliceosome C complex. Interacts with eIF4AIII.

The protein localises to the nucleus speckle. Required for pre-mRNA splicing and for exon-junction complex (EJC) assembly. Hinders eIF4AIII from non-specifically binding RNA and escorts it to the splicing machinery to promote EJC assembly on mature mRNAs. The polypeptide is Pre-mRNA-splicing factor CWC22 homolog (ncm) (Drosophila melanogaster (Fruit fly)).